An 880-amino-acid chain; its full sequence is Chaperone protein ClpB 1 (880 aa).

Positions 6 to 148 (PNKFTDKAWE…EASIKAVRGS (143 aa)) constitute a Clp R domain. Repeat regions lie at residues 9 to 74 (FTDK…TQRQ) and 85 to 148 (LGRS…VRGS). An NBD1 region spans residues 161–343 (EALQKFGRDL…RRFQQVYVDQ (183 aa)). 208–215 (GEPGVGKT) lines the ATP pocket. Residues 344–554 (PSVENTISIL…IAEIVAKWTG (211 aa)) are linker. Residues 394-530 (IDLVDEAAAQ…KEAKLLELQS (137 aa)) adopt a coiled-coil conformation. Positions 564 to 775 (ERQKLLQLES…RVDDTILFHA (212 aa)) are NBD2. 614–621 (GPTGVGKT) contributes to the ATP binding site. The tract at residues 776-880 (LSRSEMSHII…VKVSVTQITT (105 aa)) is C-terminal.

Belongs to the ClpA/ClpB family. In terms of assembly, homohexamer. The oligomerization is ATP-dependent.

The protein localises to the cytoplasm. In terms of biological role, part of a stress-induced multi-chaperone system, it is involved in the recovery of the cell from heat-induced damage, in cooperation with DnaK, DnaJ and GrpE. Acts before DnaK, in the processing of protein aggregates. Protein binding stimulates the ATPase activity; ATP hydrolysis unfolds the denatured protein aggregates, which probably helps expose new hydrophobic binding sites on the surface of ClpB-bound aggregates, contributing to the solubilization and refolding of denatured protein aggregates by DnaK. In Nostoc sp. (strain PCC 7120 / SAG 25.82 / UTEX 2576), this protein is Chaperone protein ClpB 1 (clpB1).